The following is a 386-amino-acid chain: Probable pectin lyase F (386 aa).

The signal sequence occupies residues 1–16 (MKTAVLSLLLALQAYA). Cysteines 77 and 101 form a disulfide. Asparagine 124 carries an N-linked (GlcNAc...) asparagine glycan. Arginine 251 is a catalytic residue. A disulfide bridge links cysteine 326 with cysteine 334.

It belongs to the polysaccharide lyase 1 family.

It localises to the secreted. It carries out the reaction Eliminative cleavage of (1-&gt;4)-alpha-D-galacturonan methyl ester to give oligosaccharides with 4-deoxy-6-O-methyl-alpha-D-galact-4-enuronosyl groups at their non-reducing ends.. Its function is as follows. Pectinolytic enzymes consist of four classes of enzymes: pectin lyase, polygalacturonase, pectin methylesterase and rhamnogalacturonase. Among pectinolytic enzymes, pectin lyase is the most important in depolymerization of pectin, since it cleaves internal glycosidic bonds of highly methylated pectins. In Neosartorya fischeri (strain ATCC 1020 / DSM 3700 / CBS 544.65 / FGSC A1164 / JCM 1740 / NRRL 181 / WB 181) (Aspergillus fischerianus), this protein is Probable pectin lyase F (pelF).